The following is a 434-amino-acid chain: MAMQKIFAREILDSRGNPTVEVDLHTAKGRFRAAVPSGASTGIYEALELRDGDKSRYLGKGVLKAVEHINKTLGPALLEKKLSVVDQEKVDKFMIELDGTENKSKFGANAILGVSLAVCKAGAAEKGVPLYRHIADLAGNHDLVLPVPAFNVINGGSHAGNKLAMQEFMILPVGASSFREAMRIGAEVYHHLKGVIKAKYGKDATNVGDEGGFAPNILENNEALELLKTAIQAAGYPDKVVIGMDVAASEFHRNGKYDLDFKSPDDPARHITGQKLGELYKSFIKNYPVVSIEDPFDQDDWATWTSFLSGVDIQIVGDDLTVTNPKRIAQAVEKKACNCLLLKVNQIGSVTESIQACKLAQSNGWGVMVSHRSGETEDTFIADLVVGLCTGQIKTGAPCRSERLAKYNQLMRIEEALGDKAVFAGRKFRNPKAK.

The residue at position 2 (A2) is an N-acetylalanine. T72 carries the post-translational modification Phosphothreonine. 2 positions are modified to phosphoserine: S83 and S157. 2 residues coordinate substrate: H158 and E167. A Phosphoserine modification is found at S176. T205 carries the phosphothreonine modification. Catalysis depends on E210, which acts as the Proton donor. Position 229 is a phosphothreonine (T229). Y236 carries the post-translational modification Phosphotyrosine. Position 245 (D245) interacts with Mg(2+). S263 carries the phosphoserine modification. Substrate is bound by residues E293 and D318. The Mg(2+) site is built by E293 and D318. Catalysis depends on K343, which acts as the Proton acceptor. Residues 370–373 (SHRS) and K394 each bind substrate.

This sequence belongs to the enolase family. In terms of assembly, mammalian enolase is composed of 3 isozyme subunits, alpha, beta and gamma, which can form homodimers or heterodimers which are cell-type and development-specific. Interacts with PNKD. Mg(2+) serves as cofactor. The alpha/alpha homodimer is expressed in embryo and in most adult tissues. The alpha/beta heterodimer and the beta/beta homodimer are found in striated muscle, and the alpha/gamma heterodimer and the gamma/gamma homodimer in neurons.

The protein resides in the cytoplasm. The catalysed reaction is (2R)-2-phosphoglycerate = phosphoenolpyruvate + H2O. Its pathway is carbohydrate degradation; glycolysis; pyruvate from D-glyceraldehyde 3-phosphate: step 4/5. Its function is as follows. Glycolytic enzyme that catalyzes the conversion of 2-phosphoglycerate to phosphoenolpyruvate. Appears to have a function in striated muscle development and regeneration. The polypeptide is Beta-enolase (ENO3) (Oryctolagus cuniculus (Rabbit)).